We begin with the raw amino-acid sequence, 96 residues long: Salivary protein FS50 (96 aa).

A signal peptide spans 1 to 19 (MKWILVLALVCLAVEYSYS). Cystine bridges form between Cys26-Cys71, Cys50-Cys78, Cys63-Cys91, and Cys67-Cys93.

Its subcellular location is the secreted. In terms of biological role, salivary protein that inhibits host voltage-gated sodium channel Nav1.5/SCN5A. In Xenopsylla cheopis (Oriental rat flea), this protein is Salivary protein FS50.